A 373-amino-acid polypeptide reads, in one-letter code: MTKNLLDFDLDGLAAFCEQLGEKRFRAVQLFRWIHQRGASDFARMSDLAKSLREKLSGCAHVAALPVISEHVSADGTVKWLFDVGDGNAVESVFIPEDDRGTLCISSQAGCAVGCRFCSTGHQGFSRNLTSGEIVAQLWFAEHALRARLGTQERVISNVVMMGMGEPLQNYTALVPALRTMLDDHGYGLSRRRLTVSTSGVVPMMDRLSQDCAVAMAVSLHAPNDALRDQLVPLNRKYPLRELLDACTRYLEHAPRDFITFEYCMLDGVNDQPEHARQLIDLVRPRGGEGVRCKFNLIPFNPFPASGLHRSNPQQVAAFAKMLSDAGIVTTVRKTRGDDIDAACGQLAGDVKDRTRAAERMARQRTIVLKPVA.

E91 serves as the catalytic Proton acceptor. One can recognise a Radical SAM core domain in the interval 97–339 (EDDRGTLCIS…TTVRKTRGDD (243 aa)). Residues C104 and C344 are joined by a disulfide bond. [4Fe-4S] cluster-binding residues include C111, C115, and C118. Residues 165-166 (GE), S197, 219-221 (SLH), and N301 contribute to the S-adenosyl-L-methionine site. C344 (S-methylcysteine intermediate) is an active-site residue.

It belongs to the radical SAM superfamily. RlmN family. [4Fe-4S] cluster is required as a cofactor.

It is found in the cytoplasm. The enzyme catalyses adenosine(2503) in 23S rRNA + 2 reduced [2Fe-2S]-[ferredoxin] + 2 S-adenosyl-L-methionine = 2-methyladenosine(2503) in 23S rRNA + 5'-deoxyadenosine + L-methionine + 2 oxidized [2Fe-2S]-[ferredoxin] + S-adenosyl-L-homocysteine. The catalysed reaction is adenosine(37) in tRNA + 2 reduced [2Fe-2S]-[ferredoxin] + 2 S-adenosyl-L-methionine = 2-methyladenosine(37) in tRNA + 5'-deoxyadenosine + L-methionine + 2 oxidized [2Fe-2S]-[ferredoxin] + S-adenosyl-L-homocysteine. Specifically methylates position 2 of adenine 2503 in 23S rRNA and position 2 of adenine 37 in tRNAs. m2A2503 modification seems to play a crucial role in the proofreading step occurring at the peptidyl transferase center and thus would serve to optimize ribosomal fidelity. The chain is Dual-specificity RNA methyltransferase RlmN from Paracidovorax citrulli (strain AAC00-1) (Acidovorax citrulli).